Here is a 99-residue protein sequence, read N- to C-terminus: MKFFVIALIVLLGLLQYRLWSGSNSLPEYFVLQKHIAVQQEGNDKLNERNQVLKEEIIDLKSGTEAIEERARNELGMVKEGETFYRVVGGERSVSSPSQ.

Residues 1-3 (MKF) are Cytoplasmic-facing. The chain crosses the membrane as a helical span at residues 4–21 (FVIALIVLLGLLQYRLWS). The Periplasmic portion of the chain corresponds to 22–99 (GSNSLPEYFV…GERSVSSPSQ (78 aa)). A coiled-coil region spans residues 36–73 (IAVQQEGNDKLNERNQVLKEEIIDLKSGTEAIEERARN).

Belongs to the FtsB family. In terms of assembly, part of a complex composed of FtsB, FtsL and FtsQ.

The protein localises to the cell inner membrane. In terms of biological role, essential cell division protein. May link together the upstream cell division proteins, which are predominantly cytoplasmic, with the downstream cell division proteins, which are predominantly periplasmic. The protein is Cell division protein FtsB of Shewanella sp. (strain W3-18-1).